Consider the following 122-residue polypeptide: Basic phospholipase A2 homolog myotoxin II (122 aa).

7 disulfides stabilise this stretch: cysteine 26–cysteine 116, cysteine 28–cysteine 44, cysteine 43–cysteine 95, cysteine 49–cysteine 122, cysteine 50–cysteine 88, cysteine 57–cysteine 81, and cysteine 75–cysteine 86. The interval 105-118 (KKYRYNYLKPFCKK) is important for membrane-damaging activities in eukaryotes and bacteria; heparin-binding.

The protein belongs to the phospholipase A2 family. Group II subfamily. K49 sub-subfamily. As to quaternary structure, homodimer; non-covalently linked (probable alternative/compact dimer conformation). As to expression, expressed by the venom gland.

Its subcellular location is the secreted. Its activity is regulated as follows. Myotoxic activity is inhibited by suramin and rosmarinic acid. Cytotoxic and myotoxic activities are inhibited by pre-incubation with varespladib. Suramin inhibits this myotoxin by (i) direct blockage of the MDoS and MDiS, preventing the toxin/membrane interaction and disruption and (ii) formation of an oligomeric complex, resulting in a tetrameric configuration for which both MDoS and MDiS becomes physically inaccessible, thus avoiding any possibility of toxin-membrane interaction or disruption. Heparin completely inhibits the cytotoxic and bactericidal activities, but only partially the myotoxic, edema-inducing and lethal effects. In terms of biological role, snake venom phospholipase A2 (PLA2) homolog that lacks enzymatic activity. Shows high myotoxin activities. Also shows neurotoxicity, since it induces muscle paralysis when tested on mouse phrenic-diaphragm preparations. Displays edema-inducing activities. Also displays antimicrobial activity against E.coli and C.albicans, as well as antitumoral activity against some human and mice cell lines. In addition, it is effective as parasiticidal agent against Leishmania sp. and S.mansoni. It also disrupts negatively charged liposomes in a dose- and temperature-dependent manner and shows toxicity by intraperitoneal route. In contrast to other phospholipase A2-like toxins, this myotoxin does not require fatty acid binding to be active. The polypeptide is Basic phospholipase A2 homolog myotoxin II (Bothrops moojeni (Lance-headed viper)).